Reading from the N-terminus, the 197-residue chain is Nucleoid occlusion factor SlmA (197 aa).

The 61-residue stretch at I7–L67 folds into the HTH tetR-type domain. The H-T-H motif DNA-binding region spans T30–F49. A coiled-coil region spans residues A110 to E130.

This sequence belongs to the nucleoid occlusion factor SlmA family. As to quaternary structure, homodimer. Interacts with FtsZ.

It is found in the cytoplasm. It localises to the nucleoid. Required for nucleoid occlusion (NO) phenomenon, which prevents Z-ring formation and cell division over the nucleoid. Acts as a DNA-associated cell division inhibitor that binds simultaneously chromosomal DNA and FtsZ, and disrupts the assembly of FtsZ polymers. SlmA-DNA-binding sequences (SBS) are dispersed on non-Ter regions of the chromosome, preventing FtsZ polymerization at these regions. In Shewanella sp. (strain W3-18-1), this protein is Nucleoid occlusion factor SlmA.